Here is a 499-residue protein sequence, read N- to C-terminus: Glycerol kinase (499 aa).

An ADP-binding site is contributed by Thr13. 3 residues coordinate ATP: Thr13, Thr14, and Ser15. Thr13 serves as a coordination point for sn-glycerol 3-phosphate. Arg17 is an ADP binding site. Sn-glycerol 3-phosphate contacts are provided by Arg83, Glu84, Tyr135, and Asp244. Glycerol is bound by residues Arg83, Glu84, Tyr135, Asp244, and Gln245. Residues Thr266 and Gly310 each contribute to the ADP site. The ATP site is built by Thr266, Gly310, Gln314, and Gly411. The ADP site is built by Gly411 and Asn415.

This sequence belongs to the FGGY kinase family.

The enzyme catalyses glycerol + ATP = sn-glycerol 3-phosphate + ADP + H(+). It functions in the pathway polyol metabolism; glycerol degradation via glycerol kinase pathway; sn-glycerol 3-phosphate from glycerol: step 1/1. With respect to regulation, inhibited by fructose 1,6-bisphosphate (FBP). Key enzyme in the regulation of glycerol uptake and metabolism. Catalyzes the phosphorylation of glycerol to yield sn-glycerol 3-phosphate. The chain is Glycerol kinase from Pseudothermotoga lettingae (strain ATCC BAA-301 / DSM 14385 / NBRC 107922 / TMO) (Thermotoga lettingae).